The chain runs to 101 residues: Small ribosomal subunit protein uS14 (101 aa).

It belongs to the universal ribosomal protein uS14 family. Part of the 30S ribosomal subunit. Contacts proteins S3 and S10.

Functionally, binds 16S rRNA, required for the assembly of 30S particles and may also be responsible for determining the conformation of the 16S rRNA at the A site. The chain is Small ribosomal subunit protein uS14 from Shewanella sediminis (strain HAW-EB3).